A 66-amino-acid chain; its full sequence is uncharacterized protein (66 aa).

This is an uncharacterized protein from Chlamydia pneumoniae (Chlamydophila pneumoniae).